A 326-amino-acid chain; its full sequence is 5-dehydro-2-deoxygluconokinase (326 aa).

This sequence belongs to the carbohydrate kinase PfkB family.

The catalysed reaction is 5-dehydro-2-deoxy-D-gluconate + ATP = 6-phospho-5-dehydro-2-deoxy-D-gluconate + ADP + H(+). It functions in the pathway polyol metabolism; myo-inositol degradation into acetyl-CoA; acetyl-CoA from myo-inositol: step 5/7. Functionally, catalyzes the phosphorylation of 5-dehydro-2-deoxy-D-gluconate (2-deoxy-5-keto-D-gluconate or DKG) to 6-phospho-5-dehydro-2-deoxy-D-gluconate (DKGP). The sequence is that of 5-dehydro-2-deoxygluconokinase from Shouchella clausii (strain KSM-K16) (Alkalihalobacillus clausii).